Here is a 474-residue protein sequence, read N- to C-terminus: tRNA-2-methylthio-N(6)-dimethylallyladenosine synthase (474 aa).

Residues 3–120 (KKLHIKTWGC…LPEMINAVRG (118 aa)) enclose the MTTase N-terminal domain. The [4Fe-4S] cluster site is built by Cys-12, Cys-49, Cys-83, Cys-157, Cys-161, and Cys-164. Residues 143–375 (RADGPTAFVS…QERINQQAMA (233 aa)) enclose the Radical SAM core domain. One can recognise a TRAM domain in the interval 378–441 (RRMLGTVQRI…TNSLRGKIVR (64 aa)).

The protein belongs to the methylthiotransferase family. MiaB subfamily. In terms of assembly, monomer. The cofactor is [4Fe-4S] cluster.

It localises to the cytoplasm. The enzyme catalyses N(6)-dimethylallyladenosine(37) in tRNA + (sulfur carrier)-SH + AH2 + 2 S-adenosyl-L-methionine = 2-methylsulfanyl-N(6)-dimethylallyladenosine(37) in tRNA + (sulfur carrier)-H + 5'-deoxyadenosine + L-methionine + A + S-adenosyl-L-homocysteine + 2 H(+). Catalyzes the methylthiolation of N6-(dimethylallyl)adenosine (i(6)A), leading to the formation of 2-methylthio-N6-(dimethylallyl)adenosine (ms(2)i(6)A) at position 37 in tRNAs that read codons beginning with uridine. In Klebsiella pneumoniae (strain 342), this protein is tRNA-2-methylthio-N(6)-dimethylallyladenosine synthase.